We begin with the raw amino-acid sequence, 449 residues long: Methionine aminopeptidase 2 (449 aa).

A disordered region spans residues 1–91 (MAAQAAPELA…PRIPLTTLFP (91 aa)). Acidic residues predominate over residues 34–50 (EEAENEGDSDDDRDDEQ). Positions 61–75 (KKKKKKRPKKKKKTA) are enriched in basic residues. Position 199 (histidine 199) interacts with substrate. 3 residues coordinate a divalent metal cation: aspartate 219, aspartate 230, and histidine 299. Position 307 (histidine 307) interacts with substrate. Residues glutamate 335 and glutamate 430 each contribute to the a divalent metal cation site.

Belongs to the peptidase M24A family. Methionine aminopeptidase eukaryotic type 2 subfamily. The cofactor is Co(2+). Requires Zn(2+) as cofactor. Mn(2+) serves as cofactor. Fe(2+) is required as a cofactor.

The protein localises to the cytoplasm. It catalyses the reaction Release of N-terminal amino acids, preferentially methionine, from peptides and arylamides.. Its function is as follows. Cotranslationally removes the N-terminal methionine from nascent proteins. The N-terminal methionine is often cleaved when the second residue in the primary sequence is small and uncharged (Met-Ala-, Cys, Gly, Pro, Ser, Thr, or Val). The polypeptide is Methionine aminopeptidase 2 (Arthroderma benhamiae (strain ATCC MYA-4681 / CBS 112371) (Trichophyton mentagrophytes)).